A 59-amino-acid polypeptide reads, in one-letter code: Beta-defensin 134 (59 aa).

The N-terminal stretch at 1–19 is a signal peptide; it reads MKPLLVVFVFLFLWDPVLA. 3 cysteine pairs are disulfide-bonded: Cys-25–Cys-51, Cys-31–Cys-45, and Cys-35–Cys-52.

The protein belongs to the beta-defensin family.

The protein localises to the secreted. Has antibacterial activity. The chain is Beta-defensin 134 (DEFB134) from Pan troglodytes (Chimpanzee).